The chain runs to 388 residues: Cystathionine gamma-synthase (388 aa).

Residues 1–24 form a disordered region; sequence MSEDRTGHQGISGPATRAIHAGYR. Lys-208 is subject to N6-(pyridoxal phosphate)lysine.

Belongs to the trans-sulfuration enzymes family. In terms of assembly, homotetramer. Pyridoxal 5'-phosphate is required as a cofactor.

Its subcellular location is the cytoplasm. It carries out the reaction O-succinyl-L-homoserine + L-cysteine = L,L-cystathionine + succinate + H(+). In terms of biological role, catalyzes the formation of L-cystathionine from O-succinyl-L-homoserine (OSHS) and L-cysteine, via a gamma-replacement reaction. In the absence of thiol, catalyzes gamma-elimination to form 2-oxobutanoate, succinate and ammonia. This is Cystathionine gamma-synthase (metB) from Mycobacterium bovis (strain ATCC BAA-935 / AF2122/97).